A 454-amino-acid chain; its full sequence is tRNA modification GTPase MnmE (454 aa).

The (6S)-5-formyl-5,6,7,8-tetrahydrofolate site is built by arginine 23, glutamate 80, and lysine 120. Residues 216–377 form the TrmE-type G domain; sequence GMKVVIAGRP…LRDHLKQSMG (162 aa). Asparagine 226 serves as a coordination point for K(+). GTP contacts are provided by residues 226–231, 245–251, 270–273, 335–338, and 358–360; these read NAGKSS, TDIAGTT, DTAG, NKAD, and SAR. Serine 230 is a binding site for Mg(2+). Residues threonine 245, isoleucine 247, and threonine 250 each coordinate K(+). Threonine 251 provides a ligand contact to Mg(2+). Lysine 454 provides a ligand contact to (6S)-5-formyl-5,6,7,8-tetrahydrofolate.

Belongs to the TRAFAC class TrmE-Era-EngA-EngB-Septin-like GTPase superfamily. TrmE GTPase family. Homodimer. Heterotetramer of two MnmE and two MnmG subunits. K(+) is required as a cofactor.

The protein localises to the cytoplasm. Its function is as follows. Exhibits a very high intrinsic GTPase hydrolysis rate. Involved in the addition of a carboxymethylaminomethyl (cmnm) group at the wobble position (U34) of certain tRNAs, forming tRNA-cmnm(5)s(2)U34. The protein is tRNA modification GTPase MnmE of Serratia proteamaculans (strain 568).